The primary structure comprises 977 residues: MSADITETPNKQLLEQIRSPSFSLFNCIYELKNHTDSIGIQHELVKKLYSFPYEDLQFFIPQFVQLLVTYDSESMALEEFIITYSSRYPHFSLIVFWNLQAYIFELKNEPESRSFQAVRNLITKIQNIMFNADQQTVKAPEFRENFLPALVLCGAVASSVLLPSFKSYCLPMIKAQGKQQKSLVFKLVNFQKSLTKNLTLKNQRMSADIPKGSHSDDETATSSSIKPSLSRSASVPRRNTKKTSLSFSSDESEAYTTDDDDNKTSIELEKDFYKIDLDGLSKEKSANFLEPEENLNVNTAIKSKKRLSTLTSKVMTQPWNGIDGYNVNSQSLPDLSKAEGRDLIPFISSTESETSLLYHNNSISNDLQKNIPRQQKFSPGFDNVYLTKLLQVNYAKNETQFIMALQNISIRLSQVPKEARLSALRAELSIINDTLLPSEIDIPQLLPITSNRNKKYHKILKLNVNEASVLNSAERVPFLLFIEYLSDEIDFNPTTEYNQRIIARKKMNGATSMTVKKINSFSEVADGNFEKENKIKSSTPETVSNIIYNENTEEADLSEMPLDRKTTVSSDSFSPEMLVTPSITEQSKLSNFPSLNTKEVSTKVLADQMRIAAVMLQQLDSSGKANSEQSFLIKNRIVESMIALQDQFDSFDFEKLSQLQSDEPSAGERKLENDFKLGEDWNTKKQRIKKSSAYGHLKNWDLCSVIAKNGDDLPQEAFACQLISMISNIWKKNNIPVWTKRMKILITSANTGLVETITNAMSIHSIKKSFTEHSIKSGENSKGKIFTLLDYFHSVFGSPNSTSFRTAQQNFAKSLAAYSIICYVLQIKDRHNGNIMVDGDGHIIHIDFGFLLSNSPGSVGFEAAPFKLTVEYVELLGGVDSEIYSQFVYLCKQCFKSLRDNSEEIIEIVELMQKDSTLPCFNNGENTSVLLKQRLQLQLNDEDTDQFVENFLIGKSLGSMYTRLYDQFQMITQGIYS.

Residues 1–125 (MSADITETPN…QAVRNLITKI (125 aa)) form the PIK helical domain. A disordered region spans residues 205-261 (MSADIPKGSHSDDETATSSSIKPSLSRSASVPRRNTKKTSLSFSSDESEAYTTDDDD). The span at 220–233 (ATSSSIKPSLSRSA) shows a compositional bias: polar residues. Acidic residues predominate over residues 250 to 261 (DESEAYTTDDDD). The PI3K/PI4K catalytic domain occupies 679 to 960 (EDWNTKKQRI…FLIGKSLGSM (282 aa)). The interval 685–691 (KQRIKKS) is G-loop. A catalytic loop region spans residues 826 to 834 (QIKDRHNGN). Positions 845 to 869 (HIDFGFLLSNSPGSVGFEAAPFKLT) are activation loop.

This sequence belongs to the PI3/PI4-kinase family. Type III PI4K subfamily.

It localises to the nucleus. The catalysed reaction is a 1,2-diacyl-sn-glycero-3-phospho-(1D-myo-inositol) + ATP = a 1,2-diacyl-sn-glycero-3-phospho-(1D-myo-inositol 4-phosphate) + ADP + H(+). Its function is as follows. Acts on phosphatidylinositol (PI) in the first committed step in the production of the second messenger inositol 1,4,5,-trisphosphate. The sequence is that of Phosphatidylinositol 4-kinase PIK1alpha (PIKALPHA) from Candida albicans (strain SC5314 / ATCC MYA-2876) (Yeast).